The primary structure comprises 142 residues: Large ribosomal subunit protein uL16 (142 aa).

Belongs to the universal ribosomal protein uL16 family. Part of the 50S ribosomal subunit.

Its function is as follows. Binds 23S rRNA and is also seen to make contacts with the A and possibly P site tRNAs. The chain is Large ribosomal subunit protein uL16 from Thermosipho melanesiensis (strain DSM 12029 / CIP 104789 / BI429).